The primary structure comprises 373 residues: Glutamine synthetase (373 aa).

A2 bears the N-acetylalanine mark. A required for glutamine-induced ubiquitination by CRL4(CRBN) and proteasomal degradation region spans residues 2–25 (ATSASSHLNKGIKQMYMSLPQGEK). K11 and K14 each carry N6-acetyllysine. Residues 24–106 (EKVQAMYIWV…VFCEVFKYNQ (83 aa)) form the GS beta-grasp domain. Position 104 is a phosphotyrosine (Y104). The GS catalytic domain maps to 113-373 (LRHTCKRIMD…TGDQPFQYKN (261 aa)). E134 contacts ATP. E134, E136, E196, and E203 together coordinate Mn(2+). Position 203–208 (203–208 (EFQIGP)) interacts with ATP. 246 to 247 (NW) provides a ligand contact to L-glutamate. H253 contributes to the Mn(2+) binding site. Residues 255-257 (NFS), R319, and R324 contribute to the ATP site. R319 serves as a coordination point for L-glutamate. 336 to 338 (YFE) provides a ligand contact to ADP. Mn(2+) is bound at residue E338. R340 serves as a coordination point for L-glutamate. S343 is modified (phosphoserine).

It belongs to the glutamine synthetase family. Decamer; composed of two pentamers. Interacts with PALMD. Interacts with RHOJ. Interacts with BEST2; this interaction tethers a fraction of GLUL to the membrane, causing a decrease of cytosolic glutamine synthase (GS) activity and inhibits the chloride channel activity of BEST2 by affecting the gating at the aperture in the absence of intracellular glutamate. It depends on Mg(2+) as a cofactor. The cofactor is Mn(2+). Palmitoylated; undergoes autopalmitoylation. In terms of processing, acetylated by EP300/p300; acetylation is stimulated by increased glutamine levels and promotes ubiquitin-mediated proteasomal degradation. Post-translationally, ubiquitinated by ZNRF1. Ubiquitinated by the DCX (DDB1-CUL4-X-box) E3 ubiquitin-protein ligase complex called CRL4(CRBN), leading to proteasomal degradation.

The protein localises to the cytoplasm. Its subcellular location is the cytosol. It localises to the microsome. The protein resides in the mitochondrion. It is found in the cell membrane. It carries out the reaction L-glutamate + NH4(+) + ATP = L-glutamine + ADP + phosphate + H(+). It catalyses the reaction L-cysteinyl-[protein] + hexadecanoyl-CoA = S-hexadecanoyl-L-cysteinyl-[protein] + CoA. With respect to regulation, glutamine synthetase activity is inhibited by methionine sulfoximine (MSO). Glutamine synthetase that catalyzes the ATP-dependent conversion of glutamate and ammonia to glutamine. Its role depends on tissue localization: in the brain, it regulates the levels of toxic ammonia and converts neurotoxic glutamate to harmless glutamine, whereas in the liver, it is one of the enzymes responsible for the removal of ammonia. Plays a key role in ammonium detoxification during erythropoiesis: the glutamine synthetase activity is required to remove ammonium generated by porphobilinogen deaminase (HMBS) during heme biosynthesis to prevent ammonium accumulation and oxidative stress. Essential for proliferation of fetal skin fibroblasts. Independently of its glutamine synthetase activity, required for endothelial cell migration during vascular development. Involved in angiogenesis by regulating membrane localization and activation of the GTPase RHOJ, possibly by promoting RHOJ palmitoylation. May act as a palmitoyltransferase for RHOJ: able to autopalmitoylate and then transfer the palmitoyl group to RHOJ. Plays a role in ribosomal 40S subunit biogenesis. Through the interaction with BEST2, inhibits BEST2 channel activity by affecting the gating at the aperture in the absence of intracellular L-glutamate, but sensitizes BEST2 to intracellular L-glutamate, which promotes the opening of BEST2 and thus relieves its inhibitory effect on BEST2. The polypeptide is Glutamine synthetase (Cricetulus griseus (Chinese hamster)).